The sequence spans 371 residues: Methionine import ATP-binding protein MetN (371 aa).

A disordered region spans residues Met1–Pro22. The ABC transporter domain occupies Ile27–Val268. Gly65–Ser72 is a binding site for ATP.

The protein belongs to the ABC transporter superfamily. Methionine importer (TC 3.A.1.24) family. The complex is composed of two ATP-binding proteins (MetN), two transmembrane proteins (MetI) and a solute-binding protein (MetQ).

The protein resides in the cell inner membrane. The enzyme catalyses L-methionine(out) + ATP + H2O = L-methionine(in) + ADP + phosphate + H(+). The catalysed reaction is D-methionine(out) + ATP + H2O = D-methionine(in) + ADP + phosphate + H(+). Its function is as follows. Part of the ABC transporter complex MetNIQ involved in methionine import. Responsible for energy coupling to the transport system. This is Methionine import ATP-binding protein MetN from Rhodopseudomonas palustris (strain BisB5).